The following is a 392-amino-acid chain: MKHGNYSLATMNVCSNTTKDPLTLMAMWGSMKGYNPEQGFSFEGPEKRLEVILRCTLETHVDGLRSLDDSVWSGVVGSLNAQIVSRESNEYINSYVLTESSLFVMKNRIILITCGTTTLLNSIPNILEAISAVRGELEWVSFMHKNYSFPWMQKGPHTSLADEFATLKQHFPTGKPYIFGPVDSDHYFLFCYDDIIRPCSSEDDTQLSMTMYGLDKEQTKHWFSDRFISTSAETAAIRAATHLDRVVDGTWTLHDLQFEPCGYSINAIRDEEYQTMHITPEDHCSFASYETNSRAANYSDRMKKVLGVFRPQRFTVIVFLDPESPVGKAYNEGKGIGVEPEYYPEYNLLHRTTNEFAPGYVAMKINYVRTAAVEETVTAVGGAEAGAEGGPD.

Active-site residues include E43 and E46. The Schiff-base intermediate with substrate; via pyruvic acid role is filled by S100. Position 100 is a pyruvic acid (Ser); by autocatalysis (S100). C114 serves as the catalytic Proton donor; for catalytic activity. Active-site proton acceptor; for processing activity residues include S264 and H277.

This sequence belongs to the eukaryotic AdoMetDC family. It depends on pyruvate as a cofactor. In terms of processing, is synthesized initially as an inactive proenzyme. Formation of the active enzyme involves a self-maturation process in which the active site pyruvoyl group is generated from an internal serine residue via an autocatalytic post-translational modification. Two non-identical subunits are generated from the proenzyme in this reaction, and the pyruvate is formed at the N-terminus of the alpha chain, which is derived from the carboxyl end of the proenzyme. The post-translation cleavage follows an unusual pathway, termed non-hydrolytic serinolysis, in which the side chain hydroxyl group of the serine supplies its oxygen atom to form the C-terminus of the beta chain, while the remainder of the serine residue undergoes an oxidative deamination to produce ammonia and the pyruvoyl group blocking the N-terminus of the alpha chain.

The catalysed reaction is S-adenosyl-L-methionine + H(+) = S-adenosyl 3-(methylsulfanyl)propylamine + CO2. It functions in the pathway amine and polyamine biosynthesis; S-adenosylmethioninamine biosynthesis; S-adenosylmethioninamine from S-adenosyl-L-methionine: step 1/1. The chain is S-adenosylmethionine decarboxylase proenzyme from Leishmania infantum.